A 107-amino-acid chain; its full sequence is Subtilisin inhibitor-like protein 3 (107 aa).

Cystine bridges form between C29/C44 and C65/C95.

It belongs to the protease inhibitor I16 (SSI) family. As to quaternary structure, homodimer.

It is found in the secreted. Its function is as follows. Inhibitor of subtilisin BPN' and trypsin. The polypeptide is Subtilisin inhibitor-like protein 3 (Streptomyces coelicolor).